The following is a 301-amino-acid chain: Amine sulfotransferase (301 aa).

3'-phosphoadenylyl sulfate is bound at residue 46 to 51 (KSGTVW). The active-site Proton acceptor is His101. 3'-phosphoadenylyl sulfate is bound by residues Arg123, Ser131, Tyr186, 220–225 (ATFENM), and 252–254 (RKG).

This sequence belongs to the sulfotransferase 1 family. Expressed in male liver.

It localises to the cytoplasm. It catalyses the reaction a primary amine + 3'-phosphoadenylyl sulfate = a sulfamate + adenosine 3',5'-bisphosphate + 2 H(+). Functionally, sulfotransferase that utilizes 3'-phospho-5'-adenylyl sulfate (PAPS) as sulfonate donor to catalyze the N-sulfonation of amines (PTHP, aniline, 4-chloroaniline, 2-naphthylamine). The polypeptide is Amine sulfotransferase (SULT3A1) (Oryctolagus cuniculus (Rabbit)).